The sequence spans 431 residues: Enolase (431 aa).

Gln167 is a binding site for (2R)-2-phosphoglycerate. Glu209 acts as the Proton donor in catalysis. Mg(2+) contacts are provided by Asp246, Glu290, and Asp317. The (2R)-2-phosphoglycerate site is built by Lys342, Arg371, Ser372, and Lys393. Residue Lys342 is the Proton acceptor of the active site.

It belongs to the enolase family. In terms of assembly, component of the RNA degradosome, a multiprotein complex involved in RNA processing and mRNA degradation. It depends on Mg(2+) as a cofactor.

It is found in the cytoplasm. Its subcellular location is the secreted. The protein resides in the cell surface. The catalysed reaction is (2R)-2-phosphoglycerate = phosphoenolpyruvate + H2O. It functions in the pathway carbohydrate degradation; glycolysis; pyruvate from D-glyceraldehyde 3-phosphate: step 4/5. Functionally, catalyzes the reversible conversion of 2-phosphoglycerate (2-PG) into phosphoenolpyruvate (PEP). It is essential for the degradation of carbohydrates via glycolysis. This chain is Enolase, found in Yersinia pseudotuberculosis serotype O:1b (strain IP 31758).